The sequence spans 570 residues: Double-stranded RNA-binding protein Staufen homolog 2 (570 aa).

One can recognise a DRBM 1 domain in the interval 8–75 (TPVCLVNELA…ANKALTESTL (68 aa)). 2 disordered regions span residues 71–94 (TEST…PGSI) and 178–203 (ALQN…DDKD). Positions 83–94 (PKSNVNNNPGSI) are enriched in polar residues. One can recognise a DRBM 2 domain in the interval 95-181 (TPTVELNGLA…AMKALQALQN (87 aa)). The residue at position 188 (serine 188) is a Phosphoserine. Residues 194 to 203 (SGKEMDDDKD) show a composition bias toward basic and acidic residues. 2 consecutive DRBM domains span residues 207 to 274 (SEIS…ELKK) and 307 to 375 (NPIS…QLGY). 2 short sequence motifs (nuclear localization signal) span residues 273 to 291 (KKLP…FKKR) and 373 to 412 (LGYK…PKGI). The disordered stretch occupies residues 381–413 (LQDPLDKTGENKGWSGPKPGFPEPTNNTPKGIL). A required for dendritic transport region spans residues 381 to 570 (LQDPLDKTGE…QDCKKSKSAI (190 aa)). Serine 395 carries the phosphoserine modification. Threonine 405 is subject to Phosphothreonine. Residues serine 416, serine 426, serine 440, serine 455, and serine 492 each carry the phosphoserine modification. The tract at residues 545 to 570 (LREKADNNQAKPASISQDCKKSKSAI) is disordered. Polar residues predominate over residues 551–561 (NNQAKPASISQ).

In terms of assembly, interacts with microtubules. Isoform 2 and isoform 3 may also interact with ribosomes, and this association is independent of translation. Identified in a mRNP complex, at least composed of DHX9, DDX3X, ELAVL1, HNRNPU, IGF2BP1, ILF3, PABPC1, PCBP2, PTBP2, STAU1, STAU2, SYNCRIP and YBX1. Interacts with the exportin XPO5. This requires RNA and RAN bound to GTP. Interacts with TRIM71 (via NHL repeats) in an RNA-dependent manner. Expressed in brain and neurons, where isoform 2 and isoform 3 appear to be the most abundant. Expressed at the neuromuscular junction of the extensor digitorum longus, tibialis anterior and soleus muscles. Expression at neuromuscular junctions is most pronounced in slow-twitch muscle. Also weakly expressed in heart, kidney, ovary and testis.

Its subcellular location is the cytoplasm. The protein localises to the nucleus. The protein resides in the nucleolus. It localises to the endoplasmic reticulum. Functionally, RNA-binding protein required for the microtubule-dependent transport of neuronal RNA from the cell body to the dendrite. As protein synthesis occurs within the dendrite, the localization of specific mRNAs to dendrites may be a prerequisite for neurite outgrowth and plasticity at sites distant from the cell body. In Mus musculus (Mouse), this protein is Double-stranded RNA-binding protein Staufen homolog 2 (Stau2).